Here is a 110-residue protein sequence, read N- to C-terminus: Large ribosomal subunit protein uL22 (110 aa).

This sequence belongs to the universal ribosomal protein uL22 family. As to quaternary structure, part of the 50S ribosomal subunit.

Its function is as follows. This protein binds specifically to 23S rRNA; its binding is stimulated by other ribosomal proteins, e.g. L4, L17, and L20. It is important during the early stages of 50S assembly. It makes multiple contacts with different domains of the 23S rRNA in the assembled 50S subunit and ribosome. Functionally, the globular domain of the protein is located near the polypeptide exit tunnel on the outside of the subunit, while an extended beta-hairpin is found that lines the wall of the exit tunnel in the center of the 70S ribosome. The polypeptide is Large ribosomal subunit protein uL22 (Shigella flexneri serotype 5b (strain 8401)).